The following is a 658-amino-acid chain: MSFSISLSFPDGSQRDFPAEITGLELAESISKSLAKKAIAYSLNGVIRDLLDPLEQSGQVEIITRDDPRALQLIRHSCAHVLAEAVQELFPETQVTIGPVIENGFYYDFARQQPFTLEDLNTIEKKMREIIQRNKFFKKEIWSREKAKKIFSDKGELYKVELIDAIPEDQDLKIYYQGDWFDLCRGPHVPSTGQIGNAFKLMKVAGAYWRGDANNPMLTRIYGTAFSNENALKAYLNMLEEAEKRDHRRLGREMDLFHFQEEGPGMIFWHPKGWKMFQNLVSYMRRRLDEHKYDEVNAPQVLDKSLWETSGHWGWYQENMFKTIPATNDWNDEHVYALKPMNCPGHVQIFKHGLKSYRDLPIRLAEFGLLHRYEPSGSLHGLMRVRSFTQDDAHVFCTDEQLADECLKINDLILSTYADFGFEEIILKLSTRPEKRVGSDELWDHAENIMMSVLKTIEKEAKGRIKTSILQGEGAFYGPKFEYTLKDAIGREWQCGTTQVDFNLPERFEVFYINRDSEKCQPVMIHRAIFGSMERFLGILIENFAGHMPLWLAPQQIVVTTITSEANEYAEKITAKLKASGLSAVSDLRSEKINYKIREHSLQKVPVILVCGKRESETNSVNMRRLGSMNQISLPIDQAIKQLTNEAIPPDLRRFMNS.

Residues 1 to 64 (MSFSISLSFP…EQSGQVEIIT (64 aa)) enclose the TGS domain. The segment at 246–549 (DHRRLGREMD…LIENFAGHMP (304 aa)) is catalytic. Zn(2+) is bound by residues Cys-343, His-394, and His-526.

This sequence belongs to the class-II aminoacyl-tRNA synthetase family. As to quaternary structure, homodimer. Zn(2+) serves as cofactor.

The protein resides in the cytoplasm. It carries out the reaction tRNA(Thr) + L-threonine + ATP = L-threonyl-tRNA(Thr) + AMP + diphosphate + H(+). Catalyzes the attachment of threonine to tRNA(Thr) in a two-step reaction: L-threonine is first activated by ATP to form Thr-AMP and then transferred to the acceptor end of tRNA(Thr). Also edits incorrectly charged L-seryl-tRNA(Thr). The sequence is that of Threonine--tRNA ligase from Bartonella bacilliformis (strain ATCC 35685 / KC583 / Herrer 020/F12,63).